Consider the following 89-residue polypeptide: Large ribosomal subunit protein eL37A (89 aa).

Residues Cys-19, Cys-22, Cys-34, and Cys-37 each coordinate Zn(2+). A C4-type zinc finger spans residues 19–37 (CRRCGKRSFHIQKSTCACC).

It belongs to the eukaryotic ribosomal protein eL37 family. As to quaternary structure, component of the large ribosomal subunit (LSU). Mature yeast ribosomes consist of a small (40S) and a large (60S) subunit. The 40S small subunit contains 1 molecule of ribosomal RNA (18S rRNA) and at least 33 different proteins. The large 60S subunit contains 3 rRNA molecules (25S, 5.8S and 5S rRNA) and at least 46 different proteins. The cofactor is Zn(2+).

It localises to the cytoplasm. Its function is as follows. Component of the ribosome, a large ribonucleoprotein complex responsible for the synthesis of proteins in the cell. The small ribosomal subunit (SSU) binds messenger RNAs (mRNAs) and translates the encoded message by selecting cognate aminoacyl-transfer RNA (tRNA) molecules. The large subunit (LSU) contains the ribosomal catalytic site termed the peptidyl transferase center (PTC), which catalyzes the formation of peptide bonds, thereby polymerizing the amino acids delivered by tRNAs into a polypeptide chain. The nascent polypeptides leave the ribosome through a tunnel in the LSU and interact with protein factors that function in enzymatic processing, targeting, and the membrane insertion of nascent chains at the exit of the ribosomal tunnel. This Schizosaccharomyces pombe (strain 972 / ATCC 24843) (Fission yeast) protein is Large ribosomal subunit protein eL37A (rpl3703).